The chain runs to 156 residues: Proline dehydrogenase transcriptional activator (156 aa).

The 62-residue stretch at 10 to 71 folds into the HTH asnC-type domain; sequence LDHFDLKILE…VLNPQKLGVD (62 aa). The segment at residues 29–48 is a DNA-binding region (H-T-H motif); the sequence is VLQLSKRVGLSKTPCQTRLK.

Its function is as follows. Transcriptional activator of the putA gene in response to proline. The sequence is that of Proline dehydrogenase transcriptional activator (putR) from Rhizobium radiobacter (Agrobacterium tumefaciens).